A 595-amino-acid polypeptide reads, in one-letter code: Estrogen receptor (595 aa).

Residues Met1–Tyr184 form a modulating (transactivation AF-1); mediates interaction with MACROD1 region. Ser10 is a glycosylation site (O-linked (GlcNAc) serine). Residues Leu35–Ser47 form a required for interaction with NCOA1 region. The interaction with DDX5; self-association stretch occupies residues Leu35–Met174. A phosphoserine; by CDK2 mark is found at Ser104 and Ser106. At Ser118 the chain carries Phosphoserine. The disordered stretch occupies residues Ala144–Met174. Residues Ser154 to Leu165 are compositionally biased toward basic and acidic residues. Position 167 is a phosphoserine; by CK2 (Ser167). 2 NR C4-type zinc fingers span residues Cys185–Cys205 and Cys221–Cys245. Residues Cys185–Met250 constitute a DNA-binding region (nuclear receptor). Residues Cys185–Leu310 form a mediates interaction with DNTTIP2 region. The tract at residues Met251–Leu310 is hinge. Basic residues predominate over residues Lys257 to Arg269. The interval Lys257 to Ser288 is disordered. An Asymmetric dimethylarginine; by PRMT1 modification is found at Arg260. Positions Gly262–Ile595 are interaction with AKAP13. Residues Met264 to Thr594 are self-association. The NR LBD domain occupies Thr311–His547. The segment at Thr311 to Thr594 is transactivation AF-2. 17beta-estradiol is bound by residues Glu353 and Arg394. Cys447 carries S-palmitoyl cysteine lipidation. 17beta-estradiol is bound at residue His524. Residue Tyr537 is modified to Phosphotyrosine; by Tyr-kinases. The interval Ala551 to Pro575 is disordered. Residues Met563–Pro575 are compositionally biased toward polar residues.

It belongs to the nuclear hormone receptor family. NR3 subfamily. In terms of assembly, binds DNA as a homodimer. Can form a heterodimer with ESR2. Interacts with coactivator NCOA5. Interacts with PELP1, the interaction is enhanced by 17-beta-estradiol; the interaction increases ESR1 transcriptional activity. Interacts with NCOA7; the interaction is ligand-inducible. Interacts with AKAP13, CUEDC2, HEXIM1, KDM5A, MAP1S, SMARD1, and UBE1C. Interacts with MUC1; the interaction is stimulated by 7 beta-estradiol (E2) and enhances ESR1-mediated transcription. Interacts with DNTTIP2, and UIMC1. Interacts with KMT2D/MLL2. Interacts with ATAD2; the interaction is enhanced by estradiol. Interacts with KIF18A and LDB1. Interacts with RLIM (via its C-terminus). Interacts with MACROD1. Interacts with SH2D4A and PLCG. Interacts with SH2D4A; the interaction blocks binding to PLCG and inhibits estrogen-induced cell proliferation. Interacts with DYNLL1. Interacts with CCDC62; the interaction requires estradiol and appears to enhance the transcription of target genes. Interacts with NR2C1; the interaction prevents homodimerization of ESR1 and suppresses its transcriptional activity and cell growth. Interacts with DNAAF4. Interacts with PRMT2. Interacts with RBFOX2. Interacts with EP300; the interaction is estrogen-dependent and enhanced by CITED1. Interacts with CITED1; the interaction is estrogen-dependent. Interacts with FAM120B, FOXL2, PHB2 and SLC30A9. Interacts with coactivators NCOA3 and NCOA6. Interacts with STK3/MST2 only in the presence of SAV1 and vice-versa. Binds to CSNK1D. Interacts with NCOA2; NCOA2 can interact with ESR1 AF-1 and AF-2 domains simultaneously and mediate their transcriptional synergy. Interacts with DDX5. Interacts with NCOA1; the interaction seems to require a self-association of N-terminal and C-terminal regions. Interacts with ZNF366, DDX17, NFKB1, RELA, SP1 and SP3. Interacts with NRIP1. Interacts with GPER1; the interaction occurs in an estrogen-dependent manner. Interacts with CLOCK and the interaction is stimulated by estrogen. Interacts with TRIP4 (ufmylated); estrogen dependent. Interacts with LMTK3; the interaction phosphorylates ESR1 (in vitro) and protects it against proteasomal degradation. Interacts with CCAR2 (via N-terminus) in a ligand-independent manner. Interacts with ZFHX3. Interacts with SFR1 in a ligand-dependent and -independent manner. Interacts with DCAF13, LATS1 and DCAF1; regulates ESR1 ubiquitination and ubiquitin-mediated proteasomal degradation. Interacts (via DNA-binding domain) with POU4F2 (C-terminus); this interaction increases the estrogen receptor ESR1 transcriptional activity in a DNA- and ligand 17-beta-estradiol-independent manner. Interacts with ESRRB isoform 1. Interacts with UBE3A and WBP2. Interacts with GTF2B. Interacts with RBM39. In the absence of hormonal ligand, interacts with TACC1. Interacts with PI3KR1 or PI3KR2 and PTK2/FAK1. Interacts with SRC. Interacts with BAG1; the interaction is promoted in the absence of estradiol (17-beta-estradiol/E2). Interacts with and ubiquitinated by STUB1; the interaction is promoted in the absence of estradiol (17-beta-estradiol/E2). Interacts with NEDD8. Post-translationally, phosphorylated by cyclin A/CDK2 and CK1. Phosphorylation probably enhances transcriptional activity. Dephosphorylation at Ser-118 by PPP5C inhibits its transactivation activity. Phosphorylated by LMTK3 (in vitro). In terms of processing, ubiquitinated; regulated by LATS1 via DCAF1 it leads to ESR1 proteasomal degradation. Deubiquitinated by OTUB1. Ubiquitinated by STUB1/CHIP; in the CA1 hippocampal region following loss of endogenous circulating estradiol (17-beta-estradiol/E2). Ubiquitinated by UBR5, leading to its degradation: UBR5 specifically recognizes and binds ligand-bound ESR1 when it is not associated with coactivators (NCOAs). In presence of NCOAs, the UBR5-degron is not accessible, preventing its ubiquitination and degradation. Palmitoylated at Cys-447 by ZDHHC7 and ZDHHC21. Palmitoylation is required for plasma membrane targeting and for rapid intracellular signaling via ERK and AKT kinases and cAMP generation, but not for signaling mediated by the nuclear hormone receptor. Post-translationally, dimethylated by PRMT1 at Arg-260. The methylation may favor cytoplasmic localization. Demethylated by JMJD6 at Arg-260.

Its subcellular location is the nucleus. It is found in the cytoplasm. The protein resides in the golgi apparatus. The protein localises to the cell membrane. Nuclear hormone receptor. The steroid hormones and their receptors are involved in the regulation of eukaryotic gene expression and affect cellular proliferation and differentiation in target tissues. Ligand-dependent nuclear transactivation involves either direct homodimer binding to a palindromic estrogen response element (ERE) sequence or association with other DNA-binding transcription factors, such as AP-1/c-Jun, c-Fos, ATF-2, Sp1 and Sp3, to mediate ERE-independent signaling. Ligand binding induces a conformational change allowing subsequent or combinatorial association with multiprotein coactivator complexes through LXXLL motifs of their respective components. Mutual transrepression occurs between the estrogen receptor (ER) and NF-kappa-B in a cell-type specific manner. Decreases NF-kappa-B DNA-binding activity and inhibits NF-kappa-B-mediated transcription from the IL6 promoter and displace RELA/p65 and associated coregulators from the promoter. Recruited to the NF-kappa-B response element of the CCL2 and IL8 promoters and can displace CREBBP. Present with NF-kappa-B components RELA/p65 and NFKB1/p50 on ERE sequences. Can also act synergistically with NF-kappa-B to activate transcription involving respective recruitment adjacent response elements; the function involves CREBBP. Can activate the transcriptional activity of TFF1. Also mediates membrane-initiated estrogen signaling involving various kinase cascades. Essential for MTA1-mediated transcriptional regulation of BRCA1 and BCAS3. Maintains neuronal survival in response to ischemic reperfusion injury when in the presence of circulating estradiol (17-beta-estradiol/E2). In Sus scrofa (Pig), this protein is Estrogen receptor (ESR1).